The sequence spans 497 residues: Glutamyl-tRNA(Gln) amidotransferase subunit A (497 aa).

Active-site charge relay system residues include K91 and S166. The interval S143–S171 is disordered. Residue S190 is the Acyl-ester intermediate of the active site.

This sequence belongs to the amidase family. GatA subfamily. Heterotrimer of A, B and C subunits.

The enzyme catalyses L-glutamyl-tRNA(Gln) + L-glutamine + ATP + H2O = L-glutaminyl-tRNA(Gln) + L-glutamate + ADP + phosphate + H(+). Allows the formation of correctly charged Gln-tRNA(Gln) through the transamidation of misacylated Glu-tRNA(Gln) in organisms which lack glutaminyl-tRNA synthetase. The reaction takes place in the presence of glutamine and ATP through an activated gamma-phospho-Glu-tRNA(Gln). The protein is Glutamyl-tRNA(Gln) amidotransferase subunit A of Corynebacterium glutamicum (strain R).